A 1376-amino-acid chain; its full sequence is Ubiquitin carboxyl-terminal hydrolase 47 (1376 aa).

Position 122 is an N6-acetyllysine (K122). A USP domain is found at 188 to 564 (VGLVNQAMTC…NAYMLIYRLK (377 aa)). The Nucleophile role is filled by C197. The tract at residues 426 to 452 (EKSPQTESCTDSGAENEGSCHSDQMSN) is disordered. Positions 430 to 452 (QTESCTDSGAENEGSCHSDQMSN) are enriched in polar residues. H503 serves as the catalytic Proton acceptor. At S832 the chain carries Phosphoserine. Disordered stretches follow at residues 835–863 (SYSKRTAYQKAGGDSGNVDDDCERVKGPA), 880–971 (LKSL…SSDT), and 985–1025 (GLDS…ESGK). Low complexity predominate over residues 882–900 (SLSLQQQQQDGDNGDSSKS). A phosphoserine mark is found at S911 and S934. Polar residues predominate over residues 930 to 939 (HIQTSDPENF). Basic and acidic residues predominate over residues 941 to 951 (SEERSDSDVNN). The span at 954-970 (STSSVDSDILSSSHSSD) shows a compositional bias: low complexity. Over residues 998–1007 (KANEGKKETW) the composition is skewed to basic and acidic residues. Positions 1008-1021 (DTAEEDSGTDSEYD) are enriched in acidic residues. S1014 is modified (phosphoserine). T1016 carries the post-translational modification Phosphothreonine. S1018 is subject to Phosphoserine.

The protein belongs to the peptidase C19 family. USP47 subfamily. In terms of assembly, interacts with BTRC and FBXW11. Interacts with POLB.

Its subcellular location is the cytoplasm. The enzyme catalyses Thiol-dependent hydrolysis of ester, thioester, amide, peptide and isopeptide bonds formed by the C-terminal Gly of ubiquitin (a 76-residue protein attached to proteins as an intracellular targeting signal).. Ubiquitin-specific protease that specifically deubiquitinates monoubiquitinated DNA polymerase beta (POLB), stabilizing POLB thereby playing a role in base-excision repair (BER). Acts as a regulator of cell growth and genome integrity. May also indirectly regulate CDC25A expression at a transcriptional level. The protein is Ubiquitin carboxyl-terminal hydrolase 47 (Usp47) of Mus musculus (Mouse).